The sequence spans 394 residues: Carbamoyltransferase HypF homolog (394 aa).

The protein belongs to the carbamoyltransferase HypF family.

This chain is Carbamoyltransferase HypF homolog (hypF1), found in Cupriavidus necator (strain ATCC 17699 / DSM 428 / KCTC 22496 / NCIMB 10442 / H16 / Stanier 337) (Ralstonia eutropha).